The primary structure comprises 408 residues: Argininosuccinate synthase (408 aa).

ATP contacts are provided by residues 11 to 19 and alanine 38; that span reads AYSGGLDTS. The L-citrulline site is built by tyrosine 91 and serine 96. An ATP-binding site is contributed by glycine 121. Residues threonine 123, asparagine 127, and aspartate 128 each coordinate L-aspartate. Residue asparagine 127 coordinates L-citrulline. L-citrulline contacts are provided by arginine 131, serine 182, serine 191, glutamate 267, and tyrosine 279.

It belongs to the argininosuccinate synthase family. Type 1 subfamily. Homotetramer.

The protein resides in the cytoplasm. The catalysed reaction is L-citrulline + L-aspartate + ATP = 2-(N(omega)-L-arginino)succinate + AMP + diphosphate + H(+). Its pathway is amino-acid biosynthesis; L-arginine biosynthesis; L-arginine from L-ornithine and carbamoyl phosphate: step 2/3. The protein is Argininosuccinate synthase of Azorhizobium caulinodans (strain ATCC 43989 / DSM 5975 / JCM 20966 / LMG 6465 / NBRC 14845 / NCIMB 13405 / ORS 571).